The sequence spans 288 residues: Elongation factor Ts (288 aa).

Positions 80–83 (TDFV) are involved in Mg(2+) ion dislocation from EF-Tu.

Belongs to the EF-Ts family.

It is found in the cytoplasm. Its function is as follows. Associates with the EF-Tu.GDP complex and induces the exchange of GDP to GTP. It remains bound to the aminoacyl-tRNA.EF-Tu.GTP complex up to the GTP hydrolysis stage on the ribosome. The sequence is that of Elongation factor Ts from Chromobacterium violaceum (strain ATCC 12472 / DSM 30191 / JCM 1249 / CCUG 213 / NBRC 12614 / NCIMB 9131 / NCTC 9757 / MK).